The primary structure comprises 463 residues: 23S rRNA (uracil(1939)-C(5))-methyltransferase RlmD (463 aa).

The TRAM domain occupies 8-76; the sequence is RSKSATVYTF…KRFEEGELIE (69 aa). 4 residues coordinate [4Fe-4S] cluster: C90, C96, C99, and C178. S-adenosyl-L-methionine is bound by residues Q288, F317, N322, E341, D368, and D389. The active-site Nucleophile is C415.

This sequence belongs to the class I-like SAM-binding methyltransferase superfamily. RNA M5U methyltransferase family. RlmD subfamily.

It carries out the reaction uridine(1939) in 23S rRNA + S-adenosyl-L-methionine = 5-methyluridine(1939) in 23S rRNA + S-adenosyl-L-homocysteine + H(+). In terms of biological role, catalyzes the formation of 5-methyl-uridine at position 1939 (m5U1939) in 23S rRNA. The chain is 23S rRNA (uracil(1939)-C(5))-methyltransferase RlmD from Acinetobacter baylyi (strain ATCC 33305 / BD413 / ADP1).